Here is a 252-residue protein sequence, read N- to C-terminus: Zinc import ATP-binding protein ZnuC (252 aa).

One can recognise an ABC transporter domain in the interval V5–R220. G37–S44 contacts ATP.

Belongs to the ABC transporter superfamily. Zinc importer (TC 3.A.1.15.5) family. In terms of assembly, the complex is composed of two ATP-binding proteins (ZnuC), two transmembrane proteins (ZnuB) and a solute-binding protein (ZnuA).

Its subcellular location is the cell inner membrane. It carries out the reaction Zn(2+)(out) + ATP(in) + H2O(in) = Zn(2+)(in) + ADP(in) + phosphate(in) + H(+)(in). Functionally, part of the ABC transporter complex ZnuABC involved in zinc import. Responsible for energy coupling to the transport system. The sequence is that of Zinc import ATP-binding protein ZnuC from Yersinia enterocolitica serotype O:8 / biotype 1B (strain NCTC 13174 / 8081).